The primary structure comprises 98 residues: Large ribosomal subunit protein bL28 (98 aa).

It belongs to the bacterial ribosomal protein bL28 family.

This chain is Large ribosomal subunit protein bL28, found in Mesorhizobium japonicum (strain LMG 29417 / CECT 9101 / MAFF 303099) (Mesorhizobium loti (strain MAFF 303099)).